We begin with the raw amino-acid sequence, 1709 residues long: Bud site selection protein BUD4 (1709 aa).

Disordered stretches follow at residues 1–27 (MQTSISTTTIEDHLHHYSPEESQKLLS), 67–125 (LQLQ…TAFQ), 192–281 (ENHA…PTPP), 387–429 (DISL…LNDG), 448–472 (RDKLETTKENDAPEHNNENFIDAKS), 525–549 (IQEQEQTQAAEPEEETSFSDNIKVK), 595–746 (EPAD…SNIA), 937–968 (ANKAAPNQAPPLPPQRQPSSTRSNSNKRVSRF), and 1186–1349 (IQEQ…IPGV). Residues 10 to 27 (IEDHLHHYSPEESQKLLS) are compositionally biased toward basic and acidic residues. Positions 67–77 (LQLQPQSSSAS) are enriched in low complexity. The span at 78 to 108 (IFNSPTKPLNFPRTNSKPSLDPNSSSDTYTS) shows a compositional bias: polar residues. Basic and acidic residues predominate over residues 111 to 122 (DQEKGKEEKKDT). The segment covering 255–267 (IQHQWKDPSQFNY) has biased composition (polar residues). The segment covering 389 to 402 (SLRSSGSSQSSLQS) has biased composition (low complexity). Positions 448 to 464 (RDKLETTKENDAPEHNN) are enriched in basic and acidic residues. Basic and acidic residues-rich tracts occupy residues 595-623 (EPADIHPKKENEANSHVEDTDALLKKALN), 641-655 (FHIDSDWKLEDSNDG), and 662-671 (DISRFEKSDI). Residues 687–697 (GNSSSEITTKT) show a composition bias toward polar residues. Basic and acidic residues predominate over residues 704 to 715 (DNNDKENSKSFE). The span at 953–962 (QPSSTRSNSN) shows a compositional bias: low complexity. Residues 1186-1197 (IQEQPASKSANT) show a composition bias toward polar residues. Residues 1222–1235 (SSKPAKLSSASPRK) show a composition bias toward low complexity. Residues 1286 to 1315 (SPSSGSEHQQHNPSMVSVPSQYTDATSTVP) show a composition bias toward polar residues. Basic residues predominate over residues 1325 to 1342 (PREKQKQKHHHRHHHHKQ). Residues 1575-1684 (NNYFEGYLHQ…WIQNLQEIIY (110 aa)) enclose the PH domain.

This sequence belongs to the BUD4 family.

Its subcellular location is the cell surface. The protein resides in the bud neck. It is found in the spore. The protein localises to the perispore. Its function is as follows. Required for establishment of the axial budding pattern in yeast cells. May be involved in the selection of future sites of septation in hyphal cells. Contributes to morphogenesis and is important for induction of hyphal growth. Also plays a role in epithelial adherence, and is involved in intestinal colonization and systemic infection. The role in adhesion is probably minor compared with its role in morphogenesis. The chain is Bud site selection protein BUD4 (BUD4) from Candida albicans (strain SC5314 / ATCC MYA-2876) (Yeast).